Consider the following 131-residue polypeptide: NADH dehydrogenase [ubiquinone] 1 alpha subcomplex subunit 6 (131 aa).

This sequence belongs to the complex I LYR family. Mammalian complex I is composed of 45 different subunits.

Its subcellular location is the mitochondrion inner membrane. Functionally, accessory subunit of the mitochondrial membrane respiratory chain NADH dehydrogenase (Complex I), that is believed to be not involved in catalysis. Required for proper complex I assembly. Complex I functions in the transfer of electrons from NADH to the respiratory chain. The immediate electron acceptor for the enzyme is believed to be ubiquinone. This chain is NADH dehydrogenase [ubiquinone] 1 alpha subcomplex subunit 6, found in Mus musculus (Mouse).